Reading from the N-terminus, the 499-residue chain is Aspartyl/glutamyl-tRNA(Asn/Gln) amidotransferase subunit B (499 aa).

This sequence belongs to the GatB/GatE family. GatB subfamily. As to quaternary structure, heterotrimer of A, B and C subunits.

The catalysed reaction is L-glutamyl-tRNA(Gln) + L-glutamine + ATP + H2O = L-glutaminyl-tRNA(Gln) + L-glutamate + ADP + phosphate + H(+). It catalyses the reaction L-aspartyl-tRNA(Asn) + L-glutamine + ATP + H2O = L-asparaginyl-tRNA(Asn) + L-glutamate + ADP + phosphate + 2 H(+). Allows the formation of correctly charged Asn-tRNA(Asn) or Gln-tRNA(Gln) through the transamidation of misacylated Asp-tRNA(Asn) or Glu-tRNA(Gln) in organisms which lack either or both of asparaginyl-tRNA or glutaminyl-tRNA synthetases. The reaction takes place in the presence of glutamine and ATP through an activated phospho-Asp-tRNA(Asn) or phospho-Glu-tRNA(Gln). This is Aspartyl/glutamyl-tRNA(Asn/Gln) amidotransferase subunit B from Salinispora tropica (strain ATCC BAA-916 / DSM 44818 / JCM 13857 / NBRC 105044 / CNB-440).